The following is a 464-amino-acid chain: 3-isopropylmalate dehydratase large subunit (464 aa).

[4Fe-4S] cluster is bound by residues cysteine 337, cysteine 397, and cysteine 400.

Belongs to the aconitase/IPM isomerase family. LeuC type 1 subfamily. Heterodimer of LeuC and LeuD. [4Fe-4S] cluster serves as cofactor.

The enzyme catalyses (2R,3S)-3-isopropylmalate = (2S)-2-isopropylmalate. It functions in the pathway amino-acid biosynthesis; L-leucine biosynthesis; L-leucine from 3-methyl-2-oxobutanoate: step 2/4. Its function is as follows. Catalyzes the isomerization between 2-isopropylmalate and 3-isopropylmalate, via the formation of 2-isopropylmaleate. The protein is 3-isopropylmalate dehydratase large subunit of Bacillus thuringiensis (strain Al Hakam).